Reading from the N-terminus, the 1226-residue chain is Probable DNA-binding protein SNT1 (1226 aa).

Disordered stretches follow at residues 1-219 (MGYP…YSRS) and 264-331 (LKST…PDNI). The segment covering 11-27 (GDKKRYHYSNNPNRRHP) has biased composition (basic residues). Positions 31 to 64 (YSKNSFPKSSNNGFVSSPTADNSTNPSVTPSTAS) are enriched in polar residues. Low complexity-rich tracts occupy residues 81-103 (PRPS…SSTR) and 116-131 (SSST…NTST). Composition is skewed to polar residues over residues 132-143 (ITHTNTDIGNSR) and 150-170 (SRYN…SALS). Ser-187 is subject to Phosphoserine. Residues 202–211 (NNVSSVNNNS) are compositionally biased toward low complexity. The span at 264–275 (LKSTHSQSSPSL) shows a compositional bias: polar residues. The span at 280–304 (FHDANKLDKPEASVKVETPSKDETK) shows a compositional bias: basic and acidic residues. Ser-395 bears the Phosphoserine mark. The stretch at 539–591 (DLQKKYEKECEILTKLSENLRKEEIENKRKEHELMEQKRREEGIETEKEKSLR) forms a coiled coil. The segment covering 569–590 (EHELMEQKRREEGIETEKEKSL) has biased composition (basic and acidic residues). The tract at residues 569-605 (EHELMEQKRREEGIETEKEKSLRHPSSSSSSRRRNRA) is disordered. The SANT domain maps to 668 to 720 (DASDNFTDHEHSLFLEGYLIHPKKFGKISHYMGGLRSPEECVLHYYRTKKTVN). Basic residues predominate over residues 732-745 (RKMSAAAKRRKRKE). Positions 732–796 (RKMSAAAKRR…SEVKGDPLGT (65 aa)) are disordered. Acidic residues predominate over residues 748–758 (NDEEVEVDESK). Residues 759–773 (EESTNTIEKEEKSEN) show a composition bias toward basic and acidic residues. Position 796 is a phosphothreonine (Thr-796). Residues 884-938 (APEHKTSYWSVRESQLFPELLKEFGSQWSLISEKLGTKSTTMVRNYYQRNAARNG) enclose the HTH myb-type domain. The segment at residues 911 to 934 (WSLISEKLGTKSTTMVRNYYQRNA) is a DNA-binding region (H-T-H motif). A Phosphoserine modification is found at Ser-1037. The disordered stretch occupies residues 1172–1194 (SQGTPTFPLPAPRTSPISRAPPK).

In terms of assembly, identified in a Set3C complex with SET3, HST1, HOS2, SIF2, CPR1 and HOS4.

The protein localises to the nucleus. Part of the Set3C complex, which is required to repress early/middle sporulation genes during meiosis. The sequence is that of Probable DNA-binding protein SNT1 (SNT1) from Saccharomyces cerevisiae (strain ATCC 204508 / S288c) (Baker's yeast).